A 405-amino-acid chain; its full sequence is 5-azacytidine-induced protein 2 (405 aa).

Residues 1-198 form a homodimerization region; the sequence is MDTLVEDDIC…TELQKARQTG (198 aa). Positions 40–197 form a coiled coil; sequence ALVTAYEDIK…RTELQKARQT (158 aa). The tract at residues 229 to 270 is interaction with TBK1 and IKBKE; it reads SDNMQHAYWELKREMSNLHLVTQVQAELLRKLKTSAAVKKAC. Ser331 and Ser366 each carry phosphoserine. A disordered region spans residues 357 to 377; it reads LEDNSWVFPSPPKSSETAFGE.

In terms of assembly, homodimer. Interacts with IKBKE and TBK1. Interacts with TICAM1. Interacts with TAX1BP1. Interacts with CALCOCO2. In terms of processing, ubiquitinated via 'Lys-48'-linked polyubiquitination by TRIM38, leading to its degradation. In terms of tissue distribution, testis, ovary, heart, lung, kidney and brain. Expressed mainly in the spermatocytes or spermatids in the testis.

Its subcellular location is the cytoplasm. Functionally, adapter protein which binds TBK1 and IKBKE playing a role in antiviral innate immunity. Activates serine/threonine-protein kinase TBK1 and facilitates its oligomerization. Enhances the phosphorylation of NF-kappa-B p65 subunit RELA by TBK1. Promotes TBK1-induced as well as TNF-alpha or PMA-induced activation of NF-kappa-B. Participates in IFNB promoter activation via TICAM1. In Mus musculus (Mouse), this protein is 5-azacytidine-induced protein 2 (Azi2).